Consider the following 660-residue polypeptide: Methionine--tRNA ligase (660 aa).

The 'HIGH' region motif lies at 11-21 (PYANGPCHLGH). Positions 143, 146, 155, and 158 each coordinate Zn(2+). A 'KMSKS' region motif is present at residues 325 to 329 (KMSTS). Residue Thr328 participates in ATP binding. Residues 563-660 (DFDKVVIKIG…DECEVGERIQ (98 aa)) form the tRNA-binding domain.

This sequence belongs to the class-I aminoacyl-tRNA synthetase family. MetG type 1 subfamily. In terms of assembly, homodimer. Zn(2+) is required as a cofactor.

It is found in the cytoplasm. The enzyme catalyses tRNA(Met) + L-methionine + ATP = L-methionyl-tRNA(Met) + AMP + diphosphate. Its function is as follows. Is required not only for elongation of protein synthesis but also for the initiation of all mRNA translation through initiator tRNA(fMet) aminoacylation. This Methanobrevibacter smithii (strain ATCC 35061 / DSM 861 / OCM 144 / PS) protein is Methionine--tRNA ligase.